Here is a 408-residue protein sequence, read N- to C-terminus: Solute carrier family 35 member F1 (408 aa).

Residues 1 to 20 (MIPPEPPQPQLQPPPPPAPP) form a disordered region. Helical transmembrane passes span 60 to 80 (MLIS…IGLT), 94 to 114 (VFQS…TLAV), 129 to 147 (WWKY…YLVV), 159 to 179 (QLLD…FLLI), 186 to 206 (FIGI…DVLV), 221 to 241 (LLVL…ESII), 247 to 267 (VEFL…QLAI), 284 to 304 (LLYV…PVVI), 311 to 331 (SVNL…LFLF), and 335 to 355 (FSGL…LYSS).

This sequence belongs to the SLC35F solute transporter family.

The protein resides in the cytoplasmic vesicle. The protein localises to the secretory vesicle. Its subcellular location is the synaptic vesicle membrane. In terms of biological role, putative solute transporter. The chain is Solute carrier family 35 member F1 (Slc35f1) from Mus musculus (Mouse).